The following is a 232-amino-acid chain: Aquaporin Z 2 (232 aa).

The next 2 helical transmembrane spans lie at 9–29 (FLGT…ASAF) and 32–52 (VGIG…TMAY). The NPA 1 motif lies at 63–65 (NPA). The next 3 helical transmembrane spans lie at 82 to 102 (VSYV…LYVI), 129 to 149 (LTAA…IILG), and 158 to 178 (GFAP…SIPV). Positions 184-186 (NPA) match the NPA 2 motif. A helical transmembrane segment spans residues 200-220 (LSQLWLFWIAPLFGAAIAGIV).

This sequence belongs to the MIP/aquaporin (TC 1.A.8) family. Homotetramer.

Its subcellular location is the cell inner membrane. It catalyses the reaction H2O(in) = H2O(out). In terms of biological role, channel that permits osmotically driven movement of water in both directions. It is involved in the osmoregulation and in the maintenance of cell turgor during volume expansion in rapidly growing cells. It mediates rapid entry or exit of water in response to abrupt changes in osmolarity. The polypeptide is Aquaporin Z 2 (Rhizobium meliloti (strain 1021) (Ensifer meliloti)).